A 744-amino-acid polypeptide reads, in one-letter code: MKRFFSNLFKRKQDQNSHIKQINGPTTSTPTTTPTTPTTPTTTQTPTPQNNNTNNNTNNNNNTNSNNSNQQKKEQAQASPSTNQTQTPSNNTISTSPTVTTQPSFTPGVISTSKLTTSPPESPRPPTSTTNTTQPSTTTTTATNSTNTNTASAPTKTASPSSPSATASPNNNSNNTTTTAATTTTTTTTTTTTNANQTASVNHTSSDQSLNAQNVTQTNNNNNNNNNNNNNNNANNTKPINPNDYIPLDFVDSTPKVDNNQPKRKASGPPEILPEEIDRTDFLGQGSFGSVYKGKCRGQEVAVKIPRKQKLSLYELTSFRHEVKIMSKIFHPNVVLFLGACTQSGKMQIVTELCQTDLEKLLHNDRTKKEFSLFRRMQMAKDAALGMNWLHGITRIVHNDLKTANLLVDINLRVKVTDFGFSQIKEGEEFQDKAAKGTPLWMAPEVMMGNPYNEKADVYSFGIILWEILTKEAPYSHHKDYDIFFNAICNEKERPPIPADTLPSLRHLIQTCWDHNPQNRPSFSEILFRLNEILIDCAIDFDDGRKYWKEHFLVPKQELQEEVEWSDFEKTLKATHKQLNLDYAPLKELLVQQSHQTVQKTKQVVTMERFDKVSKWFGSFFEPNTGIETIDNINKLSAKIWFHGDIVREQATSRLSKAAEGAFLIRLSSTEPKTCPFTLSMKNNQHRRIQLIDENNFTGFKIQGKTAVYNSLIELVEKCNDYPLLVPCPKFTQETFNPYDPYTN.

Residues 1-276 (MKRFFSNLFK…SGPPEILPEE (276 aa)) form a disordered region. Low complexity-rich tracts occupy residues 25–70 (PTTS…NSNQ), 79–107 (SPST…SFTP), and 127–200 (TSTT…QTAS). Positions 201-210 (VNHTSSDQSL) are enriched in polar residues. The segment covering 211–236 (NAQNVTQTNNNNNNNNNNNNNNNANN) has biased composition (low complexity). Positions 277 to 534 (IDRTDFLGQG…EILFRLNEIL (258 aa)) constitute a Protein kinase domain. ATP is bound by residues 283 to 291 (LGQGSFGSV) and Lys304. Asp400 acts as the Proton acceptor in catalysis. The SH2 domain occupies 641-734 (WFHGDIVREQ…LVPCPKFTQE (94 aa)).

The protein belongs to the protein kinase superfamily. Ser/Thr protein kinase family. SH2 domain-containing protein kinase subfamily.

Its subcellular location is the membrane. It carries out the reaction L-seryl-[protein] + ATP = O-phospho-L-seryl-[protein] + ADP + H(+). The catalysed reaction is L-threonyl-[protein] + ATP = O-phospho-L-threonyl-[protein] + ADP + H(+). Its function is as follows. Required for proper chemotaxis and phagocytosis; proper spatiotemporal control of F-actin levels in chemotaxing cells. Negative regulator of the PI3K (phosphatidylinositol 3 kinase) pathway. Predominantly phosphorylates serines and threonines and tyrosines at a lower level. This is Dual specificity protein kinase shkD (shkD) from Dictyostelium discoideum (Social amoeba).